Here is a 230-residue protein sequence, read N- to C-terminus: Thioredoxin domain-containing protein PLP3A (230 aa).

The Thioredoxin domain maps to 89-173 (VSEGDFLGEV…GVAMDRLVGF (85 aa)). Residues 197–230 (LSKKKKEEDDEDAEYQESIRRSVRSSENLDSDSD) form a disordered region.

It belongs to the phosducin family. As to quaternary structure, interacts with TUBB2, TUBB3, TUBB4 and TUBB5. Expressed in embryos, shoot meristems, leaf primordia, root meristems, floral meristems and young floral buds.

It localises to the cytoplasm. The protein localises to the nucleus. In terms of biological role, tubulin-binding protein involved in microtubule formation. In Arabidopsis thaliana (Mouse-ear cress), this protein is Thioredoxin domain-containing protein PLP3A (PLP3A).